The following is a 2788-amino-acid chain: MNKQAVKRLHMLREVSEKLNKYNLNSHPPLNVLEQATIKQCVVGPNHAAFLLEDGRICRIGFSVQPDRLELGKPDNNDGSKLNSSSGTGRTSRPGRTSDSPWFLSGSETLGRLAGNTLGSRWSSGVGGSGGGSSGRSSAGARDSRRQTRVIRTGRDRGSGLLGSQPQPVIPASVIPEELISQAQVVLQGKSRSVIIRELQRTNLDVNLAVNNLLSRDDEDGDDGDDTASESYLPGEDLMSLLDADIHSAHPSVIIDADAMFSEDISYFGYPSFRRSSLSRLGSSRVLLLPLERDSELLRERESVLRLRERRWLDGASFDNERGSTSKEGEPNPDKKNTPVQSPVSLGEDLQWWPDKDGTKFTCIGALYSELVAVSSKGELYQWKWTESEPYRNAQNPSLHHPRATFLGLTNEKIVLLSANSIRATVATENNKVATWVDETLSSVASKLEHTAQTYSELQGERIVSLHCCALYTCAQLENNLYWWGVVPFSQRKKMLEKARAKNKKPKSSAGVQSLNVRGGRQVCLRNNPLYHAGAVAFSISAGIPKVGVLMESVWNMNDSCRFQLRSPESLKSMEKASKTIETKPESKQEPVKTEMGPPPSPASTCSDASSIASSASMPYKRRRSTPAPKEEEKVNEEQWSLREVVFVEDVKNVPVGKVLKVDGAYVAVKFPGTSSNTNCQNSSGPDADPSSLLQDCRLLRIDELQVVKTGGTPKVPDCFQRTPKKLCIPEKTEILAVNVDSKGVHAVLKTGNWVRYCIFDLATGKAEQENNFPTSSVAFLGQNERSVAIFTAGQESPIILRDGNGTIYPMAKDCMGGIRDPDWLDLPPISSLGMGVHSLINLPANSTIKKKAAIIIMAVEKQTLMQHILRCDYEACRQYLVNLEQAVVLEQNLQMLQTFISHRCDGNRNILHACVSVCFPTSNKETKEEEEAERSERNTFAERLSAVEAIANAISVVSSNGPGNRAGSSSSRSLRLREMMRRSLRAAGLGRHEAGASSSDHQDPVSPPIAPPSWVPDPPSMDPDGDIDFILAPAVGSLTTAATGGGQGPSTSTIPGPSTEPSVVESKDRKANAHFILKLLCDSAVLQPYLRELLSAKDARGMTPFMSAVSGRAYPAAITILETAQKIAKAEVSGSEKEEDVFMGMVCPSGTNPDDSPLYVLCCNDTCSFTWTGAEHINQDIFECRTCGLLESLCCCTECARVCHKGHDCKLKRTSPTAYCDCWEKCKCKTLIAGQKSARLDLLYRLLTATNLVTLPNSRGEHLLLFLVQTVARQTVEHCQYRPPRIREDRNRKTASPDDSDMPDHDLEPPRFAQLALERVLQDWNALRSMIMFGSQENKDPLSASSRIGHLLPEEQVYLNQQSGTIRLDCFTHCLIVKCTADILLLDTLLGTLVKELQNKYTPGRREEAIAVTMRFLRSVARVFVILSVEMASSKKKNNFIPQPIGKCKRVFQALLPYAVEELCNVAESLIVPVRMGIARPTAPFTLASTSIDAMQGSEELFSVEPLPPRPSSDQSSSSSQSQSSYIIRNPQQRRISQSQPVRGREEEQDDIVSADVEEVEVVEGVAGEEDHHDEQEEHGEENAEAEGHHDEHDEDGSDMELDLLAAAETESDSESNHSNQDNASGRRSVVTAATAGSEAGASSVPAFFSEDDSQSNDSSDSDSSSSQSDDIEQETFMLDEPLERTTNSSHANGAAQAPRSMQWAVRNTQHQRAASTAPSSTSTPAASSAGLIYIDPSNLRRSGTISTSAAAAAAALEASNASSYLTSASSLARAYSIVIRQISDLMGLIPKYNHLVYSQIPAAVKLTYQDAVNLQNYVEEKLIPTWNWMVSIMDSTEAQLRYGSALASAGDPGHPNHPLHASQNSARRERMTAREEASLRTLEGRRRRATLLSARQGMMSARGDFLNYALSLMRSHNDEHSDVLPVLDVCSLKHVAYVFQALIYWIKAMNQQTTLDTPQLERKRTRELLELGIDNEDSEHENDDDTSQSATLNDKDDESLPAETGQNHPFFRRSDSMTFLGCIPPNPFEVPLAEAIPLADQPHLLQPNARKEDLFGRPSQGLYSSSAGSGKCLVEVTMDRNCLEVLPTKMSYAANLKNVMNMQNRQKKAGEDQSMLAEEADSSKPGPSAHDVAAQLKSSLLAEIGLTESEGPPLTSFRPQCSFMGMVISHDMLLGRWRLSLELFGRVFMEDVGAEPGSILTELGGFEVKESKFRREMEKLRNQQSRDLSLEVDRDRDLLIQQTMRQLNNHFGRRCATTPMAVHRVKVTFKDEPGEGSGVARSFYTAIAQAFLSNEKLPNLDCIQNANKGTHTSLMQRLRNRGERDREREREREMRRSSGLRAGSRRDRDRDFRRQLSIDTRPFRPASEGNPSDDPDPLPAHRQALGERLYPRVQAMQPAFASKITGMLLELSPAQLLLLLASEDSLRARVEEAMELIVAHGRENGADSILDLGLLDSSEKVQENRKRHGSSRSVVDMDLDDTDDGDDNAPLFYQPGKRGFYTPRPGKNTEARLNCFRNIGRILGLCLLQNELCPITLNRHVIKVLLGRKVNWHDFAFFDPVMYESLRQLILASQSSDADAVFSAMDLAFAVDLCKEEGGGQVELIPNGVNIPVTPQNVYEYVRKYAEHRMLVVAEQPLHAMRKGLLDVLPKNSLEDLTAEDFRLLVNGCGEVNVQMLISFTSFNDESGENAEKLLQFKRWFWSIVERMSMTERQDLVYFWTSSPSLPASEEGFQPMPSITIRPPDDQHLPTANTCISRLYVPLYSSKQILKQKLLLAIKTKNFGFV.

Positions 68–78 (RLELGKPDNND) are enriched in basic and acidic residues. Residues 68-165 (RLELGKPDNN…DRGSGLLGSQ (98 aa)) are disordered. The span at 84–101 (SSSGTGRTSRPGRTSDSP) shows a compositional bias: low complexity. Position 100 is a phosphoserine (Ser-100). Gly residues predominate over residues 125–134 (GVGGSGGGSS). Residues 174 to 216 (VIPEELISQAQVVLQGKSRSVIIRELQRTNLDVNLAVNNLLSR) enclose the UBA domain. Residue Ser-317 is modified to Phosphoserine. Positions 318–337 (FDNERGSTSKEGEPNPDKKN) are enriched in basic and acidic residues. Residues 318–343 (FDNERGSTSKEGEPNPDKKNTPVQSP) form a disordered region. Residues Ser-342 and Ser-567 each carry the phosphoserine modification. Residues 572–593 (KSMEKASKTIETKPESKQEPVK) are compositionally biased toward basic and acidic residues. The disordered stretch occupies residues 572–636 (KSMEKASKTI…PAPKEEEKVN (65 aa)). The residue at position 601 (Ser-601) is a Phosphoserine. Residues 603–617 (ASTCSDASSIASSAS) are compositionally biased toward low complexity. Residue Thr-626 is modified to Phosphothreonine. 3 positions are modified to phosphoserine: Ser-797, Ser-917, and Ser-1007. Disordered stretches follow at residues 988-1024 (AGLG…SMDP) and 1041-1064 (TAAT…EPSV). Residues 1006-1022 (VSPPIAPPSWVPDPPSM) are compositionally biased toward pro residues. Residues 1050-1062 (PSTSTIPGPSTEP) show a composition bias toward polar residues. Phosphothreonine is present on residues Thr-1104 and Thr-1124. The UBR-type zinc finger occupies 1166 to 1234 (DTCSFTWTGA…EKCKCKTLIA (69 aa)). Ser-1216, Ser-1297, Ser-1344, Ser-1364, and Ser-1470 each carry phosphoserine. The tract at residues 1288–1308 (REDRNRKTASPDDSDMPDHDL) is disordered. Positions 1504–1729 (SVEPLPPRPS…PSSTSTPAAS (226 aa)) are disordered. A compositionally biased stretch (low complexity) spans 1513-1526 (SSDQSSSSSQSQSS). Polar residues predominate over residues 1527 to 1542 (YIIRNPQQRRISQSQP). A Phosphoserine modification is found at Ser-1538. Acidic residues-rich tracts occupy residues 1548-1563 (EEQD…EVEV) and 1594-1603 (HDEDGSDMEL). Positions 1618-1627 (NHSNQDNASG) are enriched in polar residues. Composition is skewed to low complexity over residues 1630–1646 (SVVT…ASSV), 1657–1670 (SNDS…SSQS), and 1715–1729 (AAST…PAAS). Thr-1725 is modified (phosphothreonine). Ser-1730 is modified (phosphoserine). At Tyr-1735 the chain carries Phosphotyrosine. Phosphoserine is present on Ser-1769. The segment at 1848 to 1881 (LASAGDPGHPNHPLHASQNSARRERMTAREEASL) is disordered. Basic and acidic residues predominate over residues 1868-1881 (ARRERMTAREEASL). A Phosphothreonine modification is found at Thr-1959. Positions 1974-2011 (GIDNEDSEHENDDDTSQSATLNDKDDESLPAETGQNHP) are disordered. Residues 1975-1988 (IDNEDSEHENDDDT) show a composition bias toward acidic residues. Ser-1980, Ser-2016, and Ser-2018 each carry phosphoserine. Position 2020 is a phosphothreonine (Thr-2020). Position 2066 is a phosphoserine (Ser-2066). The disordered stretch occupies residues 2106-2132 (NRQKKAGEDQSMLAEEADSSKPGPSAH). Residue Thr-2203 is modified to Phosphothreonine. Ser-2231 and Ser-2279 each carry phosphoserine. A disordered region spans residues 2313-2383 (HTSLMQRLRN…SDDPDPLPAH (71 aa)). 2 stretches are compositionally biased toward basic and acidic residues: residues 2322–2338 (NRGE…EMRR) and 2346–2358 (SRRD…RRQL). Residues 2367–2444 (PASEGNPSDD…AMELIVAHGR (78 aa)) enclose the PABC domain. Residues 2451–2788 (ILDLGLLDSS…AIKTKNFGFV (338 aa)) form the HECT domain. Residues Ser-2459, Ser-2473, and Ser-2475 each carry the phosphoserine modification. The tract at residues 2463–2490 (VQENRKRHGSSRSVVDMDLDDTDDGDDN) is disordered. Acidic residues predominate over residues 2479-2489 (MDLDDTDDGDD). Residue Cys-2757 is the Glycyl thioester intermediate of the active site.

This sequence belongs to the UBR5 family. Homotetramer; composed of a dimer of dimers. Associates with CDK9 and TFIIS/TCEA1 and forms a transcription regulatory complex made of CDK9, RNAP II, UBR5 and TFIIS/TCEA1 that can stimulate target gene transcription (e.g. gamma fibrinogen/FGG) by recruiting their promoters. Associates with the E3 ligase complex containing DYRK2, EDD/UBR5, DDB1 and DCAF1 proteins (EDVP complex). Binds TOPBP1. Interacts with PIH1D1. Interacts with CIB1. Highest levels found in testis. Also present in liver, kidney, lung and brain.

It is found in the nucleus. Its subcellular location is the cytoplasm. It catalyses the reaction S-ubiquitinyl-[E2 ubiquitin-conjugating enzyme]-L-cysteine + [acceptor protein]-L-lysine = [E2 ubiquitin-conjugating enzyme]-L-cysteine + N(6)-ubiquitinyl-[acceptor protein]-L-lysine.. It functions in the pathway protein modification; protein ubiquitination. Functionally, E3 ubiquitin-protein ligase involved in different protein quality control pathways in the cytoplasm and nucleus. Mainly acts as a ubiquitin chain elongator that extends pre-ubiquitinated substrates. Component of the N-end rule pathway: ubiquitinates proteins bearing specific N-terminal residues that are destabilizing according to the N-end rule, leading to their degradation. Recognizes type-1 N-degrons, containing positively charged amino acids (Arg, Lys and His). Together with UBR4, part of a cytoplasm protein quality control pathway that prevents protein aggregation by catalyzing assembly of heterotypic 'Lys-11'-/'Lys-48'-linked branched ubiquitin chains on aggregated proteins, leading to substrate recognition by the segregase p97/VCP and degradation by the proteasome: UBR5 is probably branching multiple 'Lys-48'-linked chains of substrates initially modified with mixed conjugates by UBR4. Together with ITCH, catalyzes 'Lys-48'-/'Lys-63'-branched ubiquitination of TXNIP, leading to its degradation: UBR5 mediates branching of 'Lys-48'-linked chains of substrates initially modified with 'Lys-63'-linked conjugates by ITCH. Catalytic component of a nuclear protein quality control pathway that mediates ubiquitination and degradation of unpaired transcription factors (i.e. transcription factors that are not assembled into functional multiprotein complexes): specifically recognizes and binds degrons that are not accessible when transcription regulators are associated with their coactivators. Ubiquitinates various unpaired transcription regulator (MYC, SUPT4H1, SUPT5H, CDC20 and MCRS1), as well as ligand-bound nuclear receptors (ESR1, NR1H3, NR3C1, PGR, RARA, RXRA AND VDR) that are not associated with their nuclear receptor coactivators (NCOAs). Involved in maturation and/or transcriptional regulation of mRNA by mediating polyubiquitination and activation of CDK9. Also acts as a regulator of DNA damage response by acting as a suppressor of RNF168, an E3 ubiquitin-protein ligase that promotes accumulation of 'Lys-63'-linked histone H2A and H2AX at DNA damage sites, thereby acting as a guard against excessive spreading of ubiquitinated chromatin at damaged chromosomes. Regulates DNA topoisomerase II binding protein (TopBP1) in the DNA damage response. Ubiquitinates acetylated PCK1. Acts as a positive regulator of the canonical Wnt signaling pathway by mediating (1) ubiquitination and stabilization of CTNNB1, and (2) 'Lys-48'-linked ubiquitination and degradation of TLE3. Promotes disassembly of the mitotic checkpoint complex (MCC) from the APC/C complex by catalyzing ubiquitination of BUB1B, BUB3 and CDC20. Plays an essential role in extraembryonic development. Required for the maintenance of skeletal tissue homeostasis by acting as an inhibitor of hedgehog (HH) signaling. The protein is E3 ubiquitin-protein ligase UBR5 (Ubr5) of Rattus norvegicus (Rat).